The primary structure comprises 356 residues: Putative transposase y4zB (356 aa).

Residues 1-19 (MITTGTPTTRRSAAGTAGA) are compositionally biased toward low complexity. Disordered stretches follow at residues 1–54 (MITT…PLAD) and 334–356 (PPPVNPSHRRPRCSPHQMSFAYV).

This sequence belongs to the transposase 11 family.

The chain is Putative transposase y4zB from Sinorhizobium fredii (strain NBRC 101917 / NGR234).